A 417-amino-acid polypeptide reads, in one-letter code: Serine hydroxymethyltransferase (417 aa).

(6S)-5,6,7,8-tetrahydrofolate contacts are provided by residues Leu121 and 125 to 127 (GHL). Lys229 carries the N6-(pyridoxal phosphate)lysine modification. 354–356 (SPF) contacts (6S)-5,6,7,8-tetrahydrofolate.

It belongs to the SHMT family. As to quaternary structure, homodimer. Pyridoxal 5'-phosphate is required as a cofactor.

The protein localises to the cytoplasm. The catalysed reaction is (6R)-5,10-methylene-5,6,7,8-tetrahydrofolate + glycine + H2O = (6S)-5,6,7,8-tetrahydrofolate + L-serine. Its pathway is one-carbon metabolism; tetrahydrofolate interconversion. It participates in amino-acid biosynthesis; glycine biosynthesis; glycine from L-serine: step 1/1. Its function is as follows. Catalyzes the reversible interconversion of serine and glycine with tetrahydrofolate (THF) serving as the one-carbon carrier. This reaction serves as the major source of one-carbon groups required for the biosynthesis of purines, thymidylate, methionine, and other important biomolecules. Also exhibits THF-independent aldolase activity toward beta-hydroxyamino acids, producing glycine and aldehydes, via a retro-aldol mechanism. This Stutzerimonas stutzeri (strain A1501) (Pseudomonas stutzeri) protein is Serine hydroxymethyltransferase.